We begin with the raw amino-acid sequence, 491 residues long: Cobyric acid synthase (491 aa).

One can recognise a GATase cobBQ-type domain in the interval 250–437 (RLRVVVPVLP…LHGIFDHPAA (188 aa)). Cys-331 serves as the catalytic Nucleophile. Residue His-429 is part of the active site.

It belongs to the CobB/CobQ family. CobQ subfamily.

Its pathway is cofactor biosynthesis; adenosylcobalamin biosynthesis. Functionally, catalyzes amidations at positions B, D, E, and G on adenosylcobyrinic A,C-diamide. NH(2) groups are provided by glutamine, and one molecule of ATP is hydrogenolyzed for each amidation. In Xanthomonas campestris pv. campestris (strain B100), this protein is Cobyric acid synthase.